Consider the following 195-residue polypeptide: Large ribosomal subunit protein uL5 (195 aa).

This sequence belongs to the universal ribosomal protein uL5 family. Part of the 50S ribosomal subunit; part of the 5S rRNA/L5/L18/L25 subcomplex. Contacts the 5S rRNA and the P site tRNA. Forms a bridge to the 30S subunit in the 70S ribosome.

In terms of biological role, this is one of the proteins that bind and probably mediate the attachment of the 5S RNA into the large ribosomal subunit, where it forms part of the central protuberance. In the 70S ribosome it contacts protein S13 of the 30S subunit (bridge B1b), connecting the 2 subunits; this bridge is implicated in subunit movement. Contacts the P site tRNA; the 5S rRNA and some of its associated proteins might help stabilize positioning of ribosome-bound tRNAs. The sequence is that of Large ribosomal subunit protein uL5 from Leifsonia xyli subsp. xyli (strain CTCB07).